A 205-amino-acid polypeptide reads, in one-letter code: Endoribonuclease YbeY (205 aa).

Zn(2+) contacts are provided by His-124, His-128, and His-134. The segment at 162–205 is disordered; the sequence is GTAPVAPGGEAQVPNEALETSGKRQDHSLGEILPGGMSRRLAGS.

It belongs to the endoribonuclease YbeY family. The cofactor is Zn(2+).

It localises to the cytoplasm. Its function is as follows. Single strand-specific metallo-endoribonuclease involved in late-stage 70S ribosome quality control and in maturation of the 3' terminus of the 16S rRNA. This Beijerinckia indica subsp. indica (strain ATCC 9039 / DSM 1715 / NCIMB 8712) protein is Endoribonuclease YbeY.